We begin with the raw amino-acid sequence, 955 residues long: Iron-responsive element-binding protein 2 (955 aa).

Positions 504, 570, and 573 each coordinate [4Fe-4S] cluster.

Belongs to the aconitase/IPM isomerase family. [4Fe-4S] cluster is required as a cofactor. In terms of processing, ubiquitinated and degraded by the proteasome in presence of high level of iron and oxygen.

The protein resides in the cytoplasm. Its function is as follows. RNA-binding protein that binds to iron-responsive elements (IRES), which are stem-loop structures found in the 5'-UTR of ferritin, and delta aminolevulinic acid synthase mRNAs, and in the 3'-UTR of transferrin receptor mRNA. Binding to the IRE element in ferritin results in the repression of its mRNA translation. Binding of the protein to the transferrin receptor mRNA inhibits the degradation of this otherwise rapidly degraded mRNA. The sequence is that of Iron-responsive element-binding protein 2 (ireb2) from Xenopus laevis (African clawed frog).